We begin with the raw amino-acid sequence, 85 residues long: Small ribosomal subunit protein bS18 (85 aa).

The span at 1–12 (MAFAQAGGGGGQ) shows a compositional bias: gly residues. The tract at residues 1-22 (MAFAQAGGGGGQRRPFFRRRKT) is disordered.

It belongs to the bacterial ribosomal protein bS18 family. In terms of assembly, part of the 30S ribosomal subunit. Forms a tight heterodimer with protein bS6.

Its function is as follows. Binds as a heterodimer with protein bS6 to the central domain of the 16S rRNA, where it helps stabilize the platform of the 30S subunit. This chain is Small ribosomal subunit protein bS18, found in Azorhizobium caulinodans (strain ATCC 43989 / DSM 5975 / JCM 20966 / LMG 6465 / NBRC 14845 / NCIMB 13405 / ORS 571).